The primary structure comprises 65 residues: Putative antitoxin MJECL31 (65 aa).

The protein belongs to the UPF0165 family.

Possibly the antitoxin component of a type II toxin-antitoxin (TA) system. This Methanocaldococcus jannaschii (strain ATCC 43067 / DSM 2661 / JAL-1 / JCM 10045 / NBRC 100440) (Methanococcus jannaschii) protein is Putative antitoxin MJECL31.